A 380-amino-acid chain; its full sequence is Apelin receptor (380 aa).

At 1–30 (MEEGGDFDNYYGADNQSECEYTDWKSSGAL) the chain is on the extracellular side. N-linked (GlcNAc...) asparagine glycosylation is present at Asn-15. 2 cysteine pairs are disulfide-bonded: Cys-19–Cys-281 and Cys-102–Cys-181. Residues 31 to 54 (IPAIYMLVFLLGTTGNGLVLWTVF) traverse the membrane as a helical segment. The Cytoplasmic portion of the chain corresponds to 55-64 (RSSREKRRSA). A helical membrane pass occupies residues 65–86 (DIFIASLAVADLTFVVTLPLWA). Over 87–99 (TYTYRDYDWPFGT) the chain is Extracellular. Residues 100–125 (FSCKLSSYLIFVNMYASVFCLTGLSF) form a helical membrane-spanning segment. The Cytoplasmic portion of the chain corresponds to 126–146 (DRYLAIVRPVANARLRLRVSG). The helical transmembrane segment at 147–164 (AVATAVLWVLAALLAMPV) threads the bilayer. Over 165-198 (MVFRTTGDLENTTKVQCYMDYSMVATVSSDWAWE) the chain is Extracellular. Residue Asn-175 is glycosylated (N-linked (GlcNAc...) asparagine). A helical transmembrane segment spans residues 199–223 (VGLGVSSTTVGFVVPFTIMLTCYFF). Over 224–246 (IAQTIAGHFRKERIEGLRKRRRL) the chain is Cytoplasmic. A helical membrane pass occupies residues 247–270 (LSIIVVLVVTFALCWMPYHLVKTL). The Extracellular portion of the chain corresponds to 271 to 289 (YMLGSLLHWPCDFDLFLMN). A helical membrane pass occupies residues 290–312 (VFPYCTCISYVNSCLNPFLYAFF). Residues 313–380 (DPRFRQACTS…PYSQETLVVD (68 aa)) lie on the Cytoplasmic side of the membrane. Residues 342-351 (KSASYSSGHS) show a composition bias toward low complexity. Positions 342-380 (KSASYSSGHSQGPGPNMGKGGEQMHEKSIPYSQETLVVD) are disordered. A compositionally biased stretch (polar residues) spans 371-380 (PYSQETLVVD).

This sequence belongs to the G-protein coupled receptor 1 family. As to quaternary structure, homodimer; dimerization inhibits APLNR-mediated G protein and beta-arrestin signaling pathways compared to monomeric APLNR.

It localises to the cell membrane. Its function is as follows. G protein-coupled receptor for peptide hormones apelin (APLN) and apelin receptor early endogenous ligand (APELA/ELA), that plays a role in the regulation of normal cardiovascular function and fluid homeostasis. When acting as apelin receptor, activates both G(i) protein pathway that inhibits adenylate cyclase activity, and the beta-arrestin pathway that promotes internalization of the receptor. APLNR/APJ also functions as mechanoreceptor that is activated by pathological stimuli in a G-protein-independent fashion to induce beta-arrestin signaling, hence eliciting cardiac hypertrophy. However, the presence of apelin ligand blunts cardiac hypertrophic induction from APLNR/APJ on response to pathological stimuli. Plays a key role in early development such as gastrulation, blood vessels formation and heart morphogenesis by acting as a APELA receptor. May promote angioblast migration toward the embryonic midline, i.e. the position of the future vessel formation, during vasculogenesis. Promotes sinus venosus (SV)-derived endothelial cells migration into the developing heart to promote coronary blood vessel development. Also plays a role in various processes in adults such as regulation of blood vessel formation, blood pressure, heart contractility and heart failure. (Microbial infection) Alternative coreceptor with CD4 for HIV-1 infection; may be involved in the development of AIDS dementia. The protein is Apelin receptor (APLNR) of Macaca mulatta (Rhesus macaque).